Consider the following 288-residue polypeptide: Shikimate dehydrogenase (NADP(+)) (288 aa).

Residues serine 21–serine 23 and threonine 68 contribute to the shikimate site. Residue lysine 72 is the Proton acceptor of the active site. Glutamate 84 serves as a coordination point for NADP(+). Shikimate contacts are provided by asparagine 93 and aspartate 108. Residues glycine 132–alanine 136 and leucine 230 each bind NADP(+). Tyrosine 232 contacts shikimate. Glycine 253 contributes to the NADP(+) binding site.

The protein belongs to the shikimate dehydrogenase family. In terms of assembly, homodimer.

It catalyses the reaction shikimate + NADP(+) = 3-dehydroshikimate + NADPH + H(+). The protein operates within metabolic intermediate biosynthesis; chorismate biosynthesis; chorismate from D-erythrose 4-phosphate and phosphoenolpyruvate: step 4/7. Functionally, involved in the biosynthesis of the chorismate, which leads to the biosynthesis of aromatic amino acids. Catalyzes the reversible NADPH linked reduction of 3-dehydroshikimate (DHSA) to yield shikimate (SA). This Gloeothece citriformis (strain PCC 7424) (Cyanothece sp. (strain PCC 7424)) protein is Shikimate dehydrogenase (NADP(+)).